A 510-amino-acid chain; its full sequence is GMP synthase [glutamine-hydrolyzing] (510 aa).

One can recognise a Glutamine amidotransferase type-1 domain in the interval 5-195 (LVIVVDFGGQ…LYEICKADGD (191 aa)). Cys-82 functions as the Nucleophile in the catalytic mechanism. Active-site residues include His-169 and Glu-171. A GMPS ATP-PPase domain is found at 196–385 (WTMENFLEEQ…LEMPEYLVYR (190 aa)). 223-229 (SGGVDSS) contributes to the ATP binding site.

As to quaternary structure, homodimer.

The enzyme catalyses XMP + L-glutamine + ATP + H2O = GMP + L-glutamate + AMP + diphosphate + 2 H(+). The protein operates within purine metabolism; GMP biosynthesis; GMP from XMP (L-Gln route): step 1/1. Catalyzes the synthesis of GMP from XMP. In Finegoldia magna (strain ATCC 29328 / DSM 20472 / WAL 2508) (Peptostreptococcus magnus), this protein is GMP synthase [glutamine-hydrolyzing].